Here is a 519-residue protein sequence, read N- to C-terminus: Golgi-associated kinase 1B (519 aa).

Topologically, residues 1–37 (MTCPDKPGQLINWFICSLCVPRVRKLWSSRRPRTRRN) are cytoplasmic. A helical; Signal-anchor for type II membrane protein membrane pass occupies residues 38 to 55 (LLLGTACAIYLGFLVSQV). Topologically, residues 56-519 (GRASLQHGQA…HGVKVLPMNE (464 aa)) are extracellular. The disordered stretch occupies residues 62-103 (HGQAAEKGPHRSRDTAEPSFPEIPLDGTLAPPESQGNGSTLQ). A compositionally biased stretch (basic and acidic residues) spans 68 to 77 (KGPHRSRDTA). N-linked (GlcNAc...) asparagine glycosylation is present at Asn289.

This sequence belongs to the GASK family.

It localises to the golgi apparatus membrane. In Homo sapiens (Human), this protein is Golgi-associated kinase 1B.